Reading from the N-terminus, the 320-residue chain is Lipoyl synthase (320 aa).

7 residues coordinate [4Fe-4S] cluster: Cys67, Cys72, Cys78, Cys93, Cys97, Cys100, and Ser307. A Radical SAM core domain is found at 79–296 (FNHGTATFMI…REKAAEMGFE (218 aa)).

The protein belongs to the radical SAM superfamily. Lipoyl synthase family. Requires [4Fe-4S] cluster as cofactor.

The protein resides in the cytoplasm. It catalyses the reaction [[Fe-S] cluster scaffold protein carrying a second [4Fe-4S](2+) cluster] + N(6)-octanoyl-L-lysyl-[protein] + 2 oxidized [2Fe-2S]-[ferredoxin] + 2 S-adenosyl-L-methionine + 4 H(+) = [[Fe-S] cluster scaffold protein] + N(6)-[(R)-dihydrolipoyl]-L-lysyl-[protein] + 4 Fe(3+) + 2 hydrogen sulfide + 2 5'-deoxyadenosine + 2 L-methionine + 2 reduced [2Fe-2S]-[ferredoxin]. Its pathway is protein modification; protein lipoylation via endogenous pathway; protein N(6)-(lipoyl)lysine from octanoyl-[acyl-carrier-protein]: step 2/2. In terms of biological role, catalyzes the radical-mediated insertion of two sulfur atoms into the C-6 and C-8 positions of the octanoyl moiety bound to the lipoyl domains of lipoate-dependent enzymes, thereby converting the octanoylated domains into lipoylated derivatives. In Actinobacillus succinogenes (strain ATCC 55618 / DSM 22257 / CCUG 43843 / 130Z), this protein is Lipoyl synthase.